Consider the following 198-residue polypeptide: dTTP/UTP pyrophosphatase (198 aa).

Asp-78 acts as the Proton acceptor in catalysis.

This sequence belongs to the Maf family. YhdE subfamily. The cofactor is a divalent metal cation.

Its subcellular location is the cytoplasm. The enzyme catalyses dTTP + H2O = dTMP + diphosphate + H(+). It carries out the reaction UTP + H2O = UMP + diphosphate + H(+). In terms of biological role, nucleoside triphosphate pyrophosphatase that hydrolyzes dTTP and UTP. May have a dual role in cell division arrest and in preventing the incorporation of modified nucleotides into cellular nucleic acids. The polypeptide is dTTP/UTP pyrophosphatase (Chromobacterium violaceum (strain ATCC 12472 / DSM 30191 / JCM 1249 / CCUG 213 / NBRC 12614 / NCIMB 9131 / NCTC 9757 / MK)).